The following is a 474-amino-acid chain: RNA-binding protein Nova-1 (474 aa).

A compositionally biased stretch (polar residues) spans 1 to 12; that stretch reads MAAAPIQQNGTH. A disordered region spans residues 1–43; it reads MAAAPIQQNGTHTGVPIDLDPPDSRKRPLEAPPEAGSTKRTNT. The Bipartite nuclear localization signal signature appears at 26 to 42; sequence KRPLEAPPEAGSTKRTN. KH domains lie at 48–115, 146–212, and 396–463; these read QYFL…HGFI, IKQV…VELI, and KDVV…QYLI. The segment at 394-474 is required for RNA binding; the sequence is GSKDVVEIAV…QRITYEQGVR (81 aa).

As to quaternary structure, interacts with PTBP2; the interaction is direct.

It is found in the nucleus. In terms of biological role, functions to regulate alternative splicing in neurons by binding pre-mRNA in a sequence-specific manner to activate exon inclusion or exclusion. It binds specifically to the sequences 5'-YCAY-3' and regulates splicing in only a subset of regulated exons. Binding to an exonic 5'-YCAY-3' cluster changes the protein complexes assembled on pre-mRNA, blocking U1 snRNP binding and exon inclusion, whereas binding to an intronic 5'-YCAY-3' cluster enhances spliceosome assembly and exon inclusion. Binding to 5'-YCAY-3' clusters results in a local and asymmetric action to regulate spliceosome assembly and alternative splicing in neurons. Binding to an exonic 5'-YCAY-3' cluster changed the protein complexes assembled on pre-mRNA, blocking U1 snRNP (small nuclear ribonucleoprotein) binding and exon inclusion, whereas binding to an intronic 5'-YCAY-3' cluster enhanced spliceosome assembly and exon inclusion. With NOVA1, they perform unique biological functions in different brain areas and cell types. Autoregulates its own expression by acting as a splicing repressor. Acts to activate the inclusion of exon E3A in the glycine receptor alpha-2 chain and of exon E9 in gamma-aminobutyric-acid receptor gamma-2 subunit via a distal downstream UCAU-rich intronic splicing enhancer. Acts to regulate a novel glycine receptor alpha-2 chain splice variant (alpha-2N) in developing spinal cord. This Rattus norvegicus (Rat) protein is RNA-binding protein Nova-1.